We begin with the raw amino-acid sequence, 225 residues long: MKERKFINEAVKRLLVCEYVVKETENAGFGNMVMKRTPFGTNITLYVNRPGLVIGRRGSKVQQMTDTLEKKYGIETPQIEVKDVKDPDLNPSVIAKKIALSLEKGWSYRKAGNTSLNRTIQAGAKGVLIKISGKISGERARYQKFIYGNVKYSGEPGSKGMITGFSTAKLKVGILGVTVKILNPEYKLPDVFSIENITGGEEVGTESKADQTDVEGRETGNAEES.

One can recognise a KH type-2 domain in the interval 16–85 (VCEYVVKETE…TPQIEVKDVK (70 aa)). The interval 202–225 (EVGTESKADQTDVEGRETGNAEES) is disordered. A compositionally biased stretch (basic and acidic residues) spans 205-225 (TESKADQTDVEGRETGNAEES).

Belongs to the universal ribosomal protein uS3 family. Part of the 30S ribosomal subunit.

In terms of biological role, binds the lower part of the 30S subunit head. The chain is Small ribosomal subunit protein uS3 from Thermoplasma acidophilum (strain ATCC 25905 / DSM 1728 / JCM 9062 / NBRC 15155 / AMRC-C165).